We begin with the raw amino-acid sequence, 264 residues long: Thymidylate synthase (264 aa).

A dUMP-binding site is contributed by Arg-21. His-51 serves as a coordination point for (6R)-5,10-methylene-5,6,7,8-tetrahydrofolate. DUMP is bound at residue 126–127 (RR). The active-site Nucleophile is Cys-146. Residues 166 to 169 (RSAD), Asn-177, and 207 to 209 (HLY) contribute to the dUMP site. Residue Asp-169 participates in (6R)-5,10-methylene-5,6,7,8-tetrahydrofolate binding. Ala-263 serves as a coordination point for (6R)-5,10-methylene-5,6,7,8-tetrahydrofolate.

The protein belongs to the thymidylate synthase family. Bacterial-type ThyA subfamily. In terms of assembly, homodimer.

Its subcellular location is the cytoplasm. It carries out the reaction dUMP + (6R)-5,10-methylene-5,6,7,8-tetrahydrofolate = 7,8-dihydrofolate + dTMP. Its pathway is pyrimidine metabolism; dTTP biosynthesis. In terms of biological role, catalyzes the reductive methylation of 2'-deoxyuridine-5'-monophosphate (dUMP) to 2'-deoxythymidine-5'-monophosphate (dTMP) while utilizing 5,10-methylenetetrahydrofolate (mTHF) as the methyl donor and reductant in the reaction, yielding dihydrofolate (DHF) as a by-product. This enzymatic reaction provides an intracellular de novo source of dTMP, an essential precursor for DNA biosynthesis. This is Thymidylate synthase from Aromatoleum aromaticum (strain DSM 19018 / LMG 30748 / EbN1) (Azoarcus sp. (strain EbN1)).